A 663-amino-acid chain; its full sequence is Spore germination protein GerIA (663 aa).

The span at methionine 1 to asparagine 13 shows a compositional bias: basic residues. Residues methionine 1–threonine 175 are disordered. Over residues lysine 47–glutamine 56 the composition is skewed to basic and acidic residues. Composition is skewed to low complexity over residues aspartate 57 to glutamine 72, proline 88 to alanine 101, and aspartate 122 to glutamine 150. The next 5 helical transmembrane spans lie at isoleucine 414–isoleucine 434, isoleucine 451–leucine 471, alanine 491–leucine 511, alanine 541–isoleucine 561, and phenylalanine 578–phenylalanine 598.

The protein belongs to the GerABKA family.

It localises to the cell membrane. In terms of biological role, required for inosine germination. The polypeptide is Spore germination protein GerIA (gerIA) (Bacillus cereus).